Reading from the N-terminus, the 168-residue chain is Vasopressin-neurophysin 2-copeptin (168 aa).

Residues 1–23 form the signal peptide; it reads MLAMMLNTTLSACFLSLLALTSA. Residues cysteine 24 and cysteine 29 are joined by a disulfide bond. The residue at position 32 (glycine 32) is a Glycine amide. 7 disulfide bridges follow: cysteine 45–cysteine 89, cysteine 48–cysteine 62, cysteine 56–cysteine 79, cysteine 63–cysteine 69, cysteine 96–cysteine 108, cysteine 102–cysteine 120, and cysteine 109–cysteine 114. The N-linked (GlcNAc...) asparagine glycan is linked to asparagine 135.

It belongs to the vasopressin/oxytocin family. Interacts with vasopressin receptors V1bR/AVPR1B (Ki=85 pM), V1aR/AVPR1A (Ki=0.6 nM) and V2R/AVPR2 (Ki=4.9 nM). Interacts with oxytocin receptor (OXTR) (Ki=110 nM).

It is found in the secreted. Its function is as follows. Neurophysin 2 specifically binds vasopressin. Functionally, vasopressin has a direct antidiuretic action on the kidney, it also causes vasoconstriction of the peripheral vessels. Acts by binding to vasopressin receptors (V1bR/AVPR1B, V1aR/AVPR1A, and V2R/AVPR2). The chain is Vasopressin-neurophysin 2-copeptin (Avp) from Rattus norvegicus (Rat).